The chain runs to 448 residues: tRNA-2-methylthio-N(6)-dimethylallyladenosine synthase (448 aa).

An MTTase N-terminal domain is found at 7-123 (RSFYIHTFGC…LPALIGDAEE (117 aa)). Positions 16, 52, 86, 159, 163, and 166 each coordinate [4Fe-4S] cluster. One can recognise a Radical SAM core domain in the interval 145-375 (REVGVGAFVP…IDLQLSISAE (231 aa)). One can recognise a TRAM domain in the interval 378–441 (QEAVGSVVDV…SATLTGVNQG (64 aa)).

It belongs to the methylthiotransferase family. MiaB subfamily. Monomer. [4Fe-4S] cluster is required as a cofactor.

Its subcellular location is the cytoplasm. It carries out the reaction N(6)-dimethylallyladenosine(37) in tRNA + (sulfur carrier)-SH + AH2 + 2 S-adenosyl-L-methionine = 2-methylsulfanyl-N(6)-dimethylallyladenosine(37) in tRNA + (sulfur carrier)-H + 5'-deoxyadenosine + L-methionine + A + S-adenosyl-L-homocysteine + 2 H(+). Functionally, catalyzes the methylthiolation of N6-(dimethylallyl)adenosine (i(6)A), leading to the formation of 2-methylthio-N6-(dimethylallyl)adenosine (ms(2)i(6)A) at position 37 in tRNAs that read codons beginning with uridine. This Chlorobium phaeovibrioides (strain DSM 265 / 1930) (Prosthecochloris vibrioformis (strain DSM 265)) protein is tRNA-2-methylthio-N(6)-dimethylallyladenosine synthase.